A 422-amino-acid chain; its full sequence is Probable protein phosphatase 2C 69 (422 aa).

The PPM-type phosphatase domain occupies 45 to 294; sequence TLLLAEAGER…DDTTCIVVDI (250 aa). The Mn(2+) site is built by Asp-70, Gly-71, Asp-246, and Asp-285.

Belongs to the PP2C family. Requires Mg(2+) as cofactor. The cofactor is Mn(2+).

The enzyme catalyses O-phospho-L-seryl-[protein] + H2O = L-seryl-[protein] + phosphate. It catalyses the reaction O-phospho-L-threonyl-[protein] + H2O = L-threonyl-[protein] + phosphate. The chain is Probable protein phosphatase 2C 69 from Oryza sativa subsp. japonica (Rice).